The chain runs to 177 residues: Large ribosomal subunit protein uL6 (177 aa).

This sequence belongs to the universal ribosomal protein uL6 family. In terms of assembly, part of the 50S ribosomal subunit.

In terms of biological role, this protein binds to the 23S rRNA, and is important in its secondary structure. It is located near the subunit interface in the base of the L7/L12 stalk, and near the tRNA binding site of the peptidyltransferase center. The chain is Large ribosomal subunit protein uL6 from Bartonella henselae (strain ATCC 49882 / DSM 28221 / CCUG 30454 / Houston 1) (Rochalimaea henselae).